The following is a 232-amino-acid chain: DNA damage-inducible transcript 4 protein (232 aa).

The disordered stretch occupies residues 1 to 71 (MPSLWDRFSS…SGFGPEEDTA (71 aa)). Positions 9-22 (SSSSTSSSPSSLPR) are enriched in low complexity. The residue at position 19 (serine 19) is a Phosphoserine. 2 positions are modified to phosphothreonine: threonine 23 and threonine 25. Serine 121 is subject to Phosphoserine.

The protein belongs to the DDIT4 family. In terms of assembly, monomer. Interacts with BTRC. Identified in a complex with CUL4A, DDB1 and BTRC. Interacts with TXNIP; this inhibits the proteasomal degradation of DDIT4. Phosphorylated by GSK3B; this promotes proteasomal degradation. Post-translationally, polyubiquitinated by a DCX (DDB1-CUL4A-RBX1) E3 ubiquitin-protein ligase complex with BTRC as substrate-recognition component, leading to its proteasomal degradation. As to expression, broadly expressed, with lowest levels in brain, skeletal muscle and intestine. Up-regulated in substantia nigra neurons from Parkinson disease patients (at protein level).

It is found in the mitochondrion. The protein localises to the cytoplasm. Its subcellular location is the cytosol. Functionally, regulates cell growth, proliferation and survival via inhibition of the activity of the mammalian target of rapamycin complex 1 (mTORC1). Inhibition of mTORC1 is mediated by a pathway that involves DDIT4/REDD1, AKT1, the TSC1-TSC2 complex and the GTPase RHEB. Plays an important role in responses to cellular energy levels and cellular stress, including responses to hypoxia and DNA damage. Regulates p53/TP53-mediated apoptosis in response to DNA damage via its effect on mTORC1 activity. Its role in the response to hypoxia depends on the cell type; it mediates mTORC1 inhibition in fibroblasts and thymocytes, but not in hepatocytes. Required for mTORC1-mediated defense against viral protein synthesis and virus replication. Inhibits neuronal differentiation and neurite outgrowth mediated by NGF via its effect on mTORC1 activity. Required for normal neuron migration during embryonic brain development. Plays a role in neuronal cell death. The protein is DNA damage-inducible transcript 4 protein (DDIT4) of Homo sapiens (Human).